The chain runs to 569 residues: Proline--tRNA ligase (569 aa).

Belongs to the class-II aminoacyl-tRNA synthetase family. ProS type 1 subfamily. In terms of assembly, homodimer.

It is found in the cytoplasm. It catalyses the reaction tRNA(Pro) + L-proline + ATP = L-prolyl-tRNA(Pro) + AMP + diphosphate. Functionally, catalyzes the attachment of proline to tRNA(Pro) in a two-step reaction: proline is first activated by ATP to form Pro-AMP and then transferred to the acceptor end of tRNA(Pro). As ProRS can inadvertently accommodate and process non-cognate amino acids such as alanine and cysteine, to avoid such errors it has two additional distinct editing activities against alanine. One activity is designated as 'pretransfer' editing and involves the tRNA(Pro)-independent hydrolysis of activated Ala-AMP. The other activity is designated 'posttransfer' editing and involves deacylation of mischarged Ala-tRNA(Pro). The misacylated Cys-tRNA(Pro) is not edited by ProRS. The protein is Proline--tRNA ligase of Shewanella woodyi (strain ATCC 51908 / MS32).